Consider the following 355-residue polypeptide: Molybdenum import ATP-binding protein ModC (355 aa).

The region spanning 1–233 (MTLIVEAKQR…PSAAADRKEA (233 aa)) is the ABC transporter domain. 31-38 (GRSGSGKT) serves as a coordination point for ATP. The 65-residue stretch at 291–355 (GLSALNILEG…AIIKTVALEG (65 aa)) folds into the Mop domain.

Belongs to the ABC transporter superfamily. Molybdate importer (TC 3.A.1.8) family. As to quaternary structure, the complex is composed of two ATP-binding proteins (ModC), two transmembrane proteins (ModB) and a solute-binding protein (ModA).

The protein resides in the cell inner membrane. It carries out the reaction molybdate(out) + ATP + H2O = molybdate(in) + ADP + phosphate + H(+). In terms of biological role, part of the ABC transporter complex ModABC involved in molybdenum import. Responsible for energy coupling to the transport system. This Rhizobium etli (strain ATCC 51251 / DSM 11541 / JCM 21823 / NBRC 15573 / CFN 42) protein is Molybdenum import ATP-binding protein ModC.